A 74-amino-acid chain; its full sequence is uncharacterized protein (74 aa).

Residues 52-72 (ITFGFTVLGLGIGMIFGDAGL) form a helical membrane-spanning segment.

It localises to the membrane. This is an uncharacterized protein from Methanocaldococcus jannaschii (strain ATCC 43067 / DSM 2661 / JAL-1 / JCM 10045 / NBRC 100440) (Methanococcus jannaschii).